A 346-amino-acid chain; its full sequence is Methylthioribose-1-phosphate isomerase (346 aa).

Residues 46 to 48 (RGA), R89, and Q196 contribute to the substrate site. Residue D237 is the Proton donor of the active site. Residue 247–248 (NK) coordinates substrate.

It belongs to the eIF-2B alpha/beta/delta subunits family. MtnA subfamily.

The catalysed reaction is 5-(methylsulfanyl)-alpha-D-ribose 1-phosphate = 5-(methylsulfanyl)-D-ribulose 1-phosphate. It functions in the pathway amino-acid biosynthesis; L-methionine biosynthesis via salvage pathway; L-methionine from S-methyl-5-thio-alpha-D-ribose 1-phosphate: step 1/6. Its function is as follows. Catalyzes the interconversion of methylthioribose-1-phosphate (MTR-1-P) into methylthioribulose-1-phosphate (MTRu-1-P). This chain is Methylthioribose-1-phosphate isomerase, found in Geobacter sp. (strain M21).